The following is a 149-amino-acid chain: UPF0178 protein Mmwyl1_2258 (149 aa).

This sequence belongs to the UPF0178 family.

The chain is UPF0178 protein Mmwyl1_2258 from Marinomonas sp. (strain MWYL1).